The primary structure comprises 308 residues: MQSPHISVLLDEVLDAFHGLSGTFIDCTLGYGGHSGALLEQNKNLRLIACDKDDEAIEFSKKRLENFGDRVKIYKSDFSQLIKVLSTDELKNVRGILADIGVSSLQLDKNERGFSINSDTLDMRMDRACEFSAADVINSYSQQNLAEIFSKYGELSNAKALAAKIVSARNLKKITSAKELASIIGTGRVNGRSVSPAILAFQAIRVEVNDELGELNRLLESIKSANLKECKVAIISFHSLEDRIVKNTFKSWAQSCICPPNAMRCKCGNDHAIGKILTKKAIVASQKEIAANPRSSSAKMRVFEIKGR.

S-adenosyl-L-methionine contacts are provided by residues 32 to 34 (GGH), D51, F78, D99, and Q106.

It belongs to the methyltransferase superfamily. RsmH family.

It is found in the cytoplasm. The catalysed reaction is cytidine(1402) in 16S rRNA + S-adenosyl-L-methionine = N(4)-methylcytidine(1402) in 16S rRNA + S-adenosyl-L-homocysteine + H(+). Functionally, specifically methylates the N4 position of cytidine in position 1402 (C1402) of 16S rRNA. This chain is Ribosomal RNA small subunit methyltransferase H, found in Campylobacter curvus (strain 525.92).